Here is a 524-residue protein sequence, read N- to C-terminus: Lysophospholipid acyltransferase LPCAT4 (524 aa).

2 consecutive transmembrane segments (helical) span residues 40-62 (CLLG…FLLW) and 87-107 (TVCH…LGFL). Residues 129 to 134 (HSTFFD) carry the HXXXXD motif motif. The N-linked (GlcNAc...) asparagine glycan is linked to Asn152. The segment at 490 to 524 (PHKPRSTSQIPNASSPSSPTALANGTVQAPKQKGD) is disordered. Positions 495 to 518 (STSQIPNASSPSSPTALANGTVQA) are enriched in polar residues.

It belongs to the 1-acyl-sn-glycerol-3-phosphate acyltransferase family. As to expression, widely expressed with much higher level in brain. Expressed in erythroleukemic cells but not in reticulocytes.

Its subcellular location is the endoplasmic reticulum membrane. It carries out the reaction a 1-acyl-sn-glycero-3-phosphoethanolamine + an acyl-CoA = a 1,2-diacyl-sn-glycero-3-phosphoethanolamine + CoA. It catalyses the reaction a 1-O-(1Z-alkenyl)-sn-glycero-3-phosphoethanolamine + an acyl-CoA = a 1-O-(1Z-alkenyl)-2-acyl-sn-glycero-3-phosphoethanolamine + CoA. The catalysed reaction is a 1-acyl-sn-glycero-3-phosphocholine + an acyl-CoA = a 1,2-diacyl-sn-glycero-3-phosphocholine + CoA. The enzyme catalyses a 1-O-alkyl-sn-glycero-3-phosphocholine + acetyl-CoA = a 1-O-alkyl-2-acetyl-sn-glycero-3-phosphocholine + CoA. It carries out the reaction a 1-acyl-sn-glycero-3-phospho-L-serine + an acyl-CoA = a 1,2-diacyl-sn-glycero-3-phospho-L-serine + CoA. It catalyses the reaction octanoyl-CoA + a 1-acyl-sn-glycero-3-phosphoethanolamine = 1-acyl-2-octanoyl-sn-glycero-3-phosphoethanolamine + CoA. The catalysed reaction is a 1-acyl-sn-glycero-3-phosphoethanolamine + hexadecanoyl-CoA = 1-acyl-2-hexadecanoyl-sn-glycero-3-phosphoethanolamine + CoA. The enzyme catalyses a 1-acyl-sn-glycero-3-phosphoethanolamine + octadecanoyl-CoA = 1-acyl-2-octadecanoyl-sn-glycero-3-phosphoethanolamine + CoA. It carries out the reaction a 1-acyl-sn-glycero-3-phosphoethanolamine + (9Z)-octadecenoyl-CoA = 1-acyl-2-(9Z)-octadecenoyl-sn-glycero-3-phosphoethanolamine + CoA. It catalyses the reaction a 1-acyl-sn-glycero-3-phosphoethanolamine + (5Z,8Z,11Z,14Z)-eicosatetraenoyl-CoA = 1-acyl-2-(5Z,8Z,11Z,14Z)-eicosatetraenoyl-sn-glycero-3-phosphoethanolamine + CoA. The catalysed reaction is a 1-O-(1Z-alkenyl)-sn-glycero-3-phosphoethanolamine + octanoyl-CoA = 1-O-(1Z)-alkenyl-2-octanoyl-sn-glycero-3-phosphoethanolamine + CoA. The enzyme catalyses a 1-O-(1Z-alkenyl)-sn-glycero-3-phosphoethanolamine + hexadecanoyl-CoA = 1-O-(1Z)-alkenyl-2-hexadecanoyl-sn-glycero-3-phosphoethanolamine + CoA. It carries out the reaction a 1-O-(1Z-alkenyl)-sn-glycero-3-phosphoethanolamine + octadecanoyl-CoA = 1-O-(1Z)-alkenyl-2-octadecanoyl-sn-glycero-3-phosphoethanolamine + CoA. It catalyses the reaction a 1-O-(1Z-alkenyl)-sn-glycero-3-phosphoethanolamine + (9Z)-octadecenoyl-CoA = 1-O-(1Z)-alkenyl-2-(9Z)-octadecenoyl-sn-glycero-3-phosphoethanolamine + CoA. The catalysed reaction is a 1-O-(1Z-alkenyl)-sn-glycero-3-phosphoethanolamine + (5Z,8Z,11Z,14Z)-eicosatetraenoyl-CoA = 1-O-(1Z)-alkenyl-2-(5Z,8Z,11Z,14Z)-eicosatetraenoyl-sn-glycero-3-phosphoethanolamine + CoA. The enzyme catalyses a 1-acyl-sn-glycero-3-phosphocholine + hexadecanoyl-CoA = 1-acyl-2-hexadecanoyl-sn-glycero-3-phosphocholine + CoA. It carries out the reaction a 1-acyl-sn-glycero-3-phosphocholine + (9Z)-octadecenoyl-CoA = a 1-acyl-2-(9Z)-octadecenoyl-sn-glycero-3-phosphocholine + CoA. It catalyses the reaction 1-O-hexadecyl-sn-glycero-3-phosphocholine + (9Z)-octadecenoyl-CoA = 1-O-hexadecyl-2-(9Z)-octadecenoyl-sn-glycero-3-phosphocholine + CoA. The catalysed reaction is 1-O-hexadecyl-sn-glycero-3-phosphocholine + (5Z,8Z,11Z,14Z)-eicosatetraenoyl-CoA = 1-O-hexadecyl-2-(5Z,8Z,11Z,14Z)-eicosatetraenoyl-sn-glycero-3-phosphocholine + CoA. The enzyme catalyses 1-hexadecanoyl-sn-glycero-3-phospho-L-serine + (9Z)-octadecenoyl-CoA = 1-hexadecanoyl-2-(9Z-octadecenoyl)-sn-glycero-3-phospho-L-serine + CoA. It carries out the reaction 1-octadecanoyl-sn-glycero-3-phospho-(1'-sn-glycerol) + (9Z)-octadecenoyl-CoA = 1-octadecanoyl-2-(9Z-octadecenoyl)-sn-glycero-3-phospho-(1'-sn-glycerol) + CoA. It catalyses the reaction 1-octadecanoyl-sn-glycero-3-phospho-(1'-sn-glycerol) + (5Z,8Z,11Z,14Z)-eicosatetraenoyl-CoA = 1-octadecanoyl-2-(5Z,8Z,11Z,14Z-eicosatetraenoyl)-sn-glycero-3-phospho-(1'-sn-glycerol) + CoA. The protein operates within lipid metabolism; phospholipid metabolism. Functionally, displays acyl-CoA-dependent lysophospholipid acyltransferase activity with a subset of lysophospholipids as substrates; converts lysophosphatidylethanolamine to phosphatidylethanolamine, 1-alkenyl-lysophatidylethanolamine to 1-alkenyl-phosphatidylethanolamine, lysophosphatidylglycerol and alkyl-lysophosphatidylcholine to phosphatidylglycerol and alkyl-phosphatidylcholine, respectively. In contrast, has no lysophosphatidylinositol, glycerol-3-phosphate, diacylglycerol or lysophosphatidic acid acyltransferase activity. Prefers long chain acyl-CoAs (C16, C18) as acyl donors. Converts lysophosphatidylcholine to phosphatidycholine. In Mus musculus (Mouse), this protein is Lysophospholipid acyltransferase LPCAT4 (Lpcat4).